We begin with the raw amino-acid sequence, 29 residues long: Serum amyloid P-component (29 aa).

In terms of domain architecture, Pentraxin (PTX) spans 6-29; the sequence is LGKVFVFSKESNVDDVKLLTPQTE.

Belongs to the pentraxin family. In terms of assembly, homopentamer. Pentraxin (or pentaxin) have a discoid arrangement of 5 non-covalently bound subunits. Ca(2+) is required as a cofactor.

It is found in the secreted. This chain is Serum amyloid P-component, found in Hippoglossus hippoglossus (Atlantic halibut).